The sequence spans 41 residues: Protein UL21 homolog (41 aa).

It belongs to the herpesviridae UL21 family.

This Equine herpesvirus 4 (strain 1942) (EHV-4) protein is Protein UL21 homolog.